We begin with the raw amino-acid sequence, 577 residues long: Arginine--tRNA ligase (577 aa).

The short motif at 122-132 is the 'HIGH' region element; that stretch reads PNVAKEMHVGH.

Belongs to the class-I aminoacyl-tRNA synthetase family. Monomer.

The protein resides in the cytoplasm. The catalysed reaction is tRNA(Arg) + L-arginine + ATP = L-arginyl-tRNA(Arg) + AMP + diphosphate. The polypeptide is Arginine--tRNA ligase (Vibrio campbellii (strain ATCC BAA-1116)).